The chain runs to 97 residues: Mapk-regulated corepressor-interacting protein 1 (97 aa).

A disordered region spans residues 1-30 (MTSSPVSRVVYNGKRTSSPRSPPSSSEIFT). A phosphoserine mark is found at serine 21 and serine 24. A Phosphothreonine modification is found at threonine 30. The residue at position 41 (tyrosine 41) is a Phosphotyrosine. Lysine 79 carries the N6-acetyllysine modification. The PXDLS motif motif lies at 80 to 84 (PIDLS).

Belongs to the MCRIP family. In terms of assembly, interacts (unphosphorylated form, via the PXDLS motif) with CTBP1, competitively inhibiting CTBP-ZEB1 interaction. Interacts with CTBP2. Interacts with MCRIP2. Interacts with DDX6. Phosphorylation by MAPK3/1 (ERK1/2) regulates MCRIP1 binding to CTBP(s).

The protein localises to the nucleus. It is found in the cytoplasm. Its subcellular location is the stress granule. Functionally, the phosphorylation status of MCRIP1 functions as a molecular switch to regulate epithelial-mesenchymal transition. Unphosphorylated MCRIP1 binds to and inhibits the transcriptional corepressor CTBP(s). When phosphorylated by MAPK/ERK, MCRIP1 releases CTBP(s) resulting in transcriptional silencing of the E-cadherin gene and induction of epithelial-mesenchymal transition. The polypeptide is Mapk-regulated corepressor-interacting protein 1 (Homo sapiens (Human)).